The following is a 119-amino-acid chain: Large ribosomal subunit protein bL20c (119 aa).

This sequence belongs to the bacterial ribosomal protein bL20 family.

Its subcellular location is the plastid. It localises to the chloroplast. Functionally, binds directly to 23S ribosomal RNA and is necessary for the in vitro assembly process of the 50S ribosomal subunit. It is not involved in the protein synthesizing functions of that subunit. The sequence is that of Large ribosomal subunit protein bL20c from Triticum aestivum (Wheat).